The sequence spans 307 residues: tRNA dimethylallyltransferase (307 aa).

9 to 16 provides a ligand contact to ATP; that stretch reads GPTAVGKT. 11-16 provides a ligand contact to substrate; it reads TAVGKT. Positions 34 to 37 are interaction with substrate tRNA; the sequence is DSMQ.

Belongs to the IPP transferase family. Monomer. Mg(2+) serves as cofactor.

It carries out the reaction adenosine(37) in tRNA + dimethylallyl diphosphate = N(6)-dimethylallyladenosine(37) in tRNA + diphosphate. Catalyzes the transfer of a dimethylallyl group onto the adenine at position 37 in tRNAs that read codons beginning with uridine, leading to the formation of N6-(dimethylallyl)adenosine (i(6)A). This chain is tRNA dimethylallyltransferase, found in Limosilactobacillus reuteri (strain DSM 20016) (Lactobacillus reuteri).